The sequence spans 494 residues: Glutamate--tRNA ligase (494 aa).

Positions 10 to 20 (PSPTGDPHVGT) match the 'HIGH' region motif. 4 residues coordinate Zn(2+): cysteine 107, cysteine 109, cysteine 134, and histidine 136. The short motif at 251-255 (KLSKR) is the 'KMSKS' region element. Lysine 254 lines the ATP pocket.

Belongs to the class-I aminoacyl-tRNA synthetase family. Glutamate--tRNA ligase type 1 subfamily. As to quaternary structure, monomer. It depends on Zn(2+) as a cofactor.

Its subcellular location is the cytoplasm. The enzyme catalyses tRNA(Glu) + L-glutamate + ATP = L-glutamyl-tRNA(Glu) + AMP + diphosphate. In terms of biological role, catalyzes the attachment of glutamate to tRNA(Glu) in a two-step reaction: glutamate is first activated by ATP to form Glu-AMP and then transferred to the acceptor end of tRNA(Glu). The chain is Glutamate--tRNA ligase from Pseudomonas aeruginosa (strain ATCC 15692 / DSM 22644 / CIP 104116 / JCM 14847 / LMG 12228 / 1C / PRS 101 / PAO1).